The chain runs to 42 residues: DSSEEKFLRRLRRFDEGRYGPYQPFVPPPLYPQPYQPYQPQY.

A hydroxyapatite-binding; inhibits crystal growth region spans residues 1 to 6 (DSSEEK). Phosphoserine is present on residues Ser2 and Ser3. Residues 18–42 (RYGPYQPFVPPPLYPQPYQPYQPQY) are disordered. Positions 18-42 (RYGPYQPFVPPPLYPQPYQPYQPQY) are hydrophobic; inhibits precipitation of calcium phosphate salts. Residues 24-42 (PFVPPPLYPQPYQPYQPQY) are compositionally biased toward pro residues.

Belongs to the histatin/statherin family. As to expression, secreted by parotid and submandibular glands.

It localises to the secreted. Its function is as follows. Salivary protein that stabilizes saliva supersaturated with calcium salts by inhibiting the precipitation of calcium phosphate salts. It also modulates hydroxyapatite crystal formation on the tooth surface. This chain is Statherin (STATH), found in Macaca arctoides (Stump-tailed macaque).